Reading from the N-terminus, the 260-residue chain is Phosphate import ATP-binding protein PstB (260 aa).

The region spanning 14–255 (IETENLSLFY…PKNTKTEEYI (242 aa)) is the ABC transporter domain. 46 to 53 (GPSGCGKS) serves as a coordination point for ATP.

Belongs to the ABC transporter superfamily. Phosphate importer (TC 3.A.1.7) family. As to quaternary structure, the complex is composed of two ATP-binding proteins (PstB), two transmembrane proteins (PstC and PstA) and a solute-binding protein (PstS).

It localises to the cell inner membrane. The catalysed reaction is phosphate(out) + ATP + H2O = ADP + 2 phosphate(in) + H(+). In terms of biological role, part of the ABC transporter complex PstSACB involved in phosphate import. Responsible for energy coupling to the transport system. The protein is Phosphate import ATP-binding protein PstB of Borrelia garinii subsp. bavariensis (strain ATCC BAA-2496 / DSM 23469 / PBi) (Borreliella bavariensis).